Here is a 174-residue protein sequence, read N- to C-terminus: Gamma-crystallin D (174 aa).

Beta/gamma crystallin 'Greek key' domains lie at 2–40 (GKIT…RVDS) and 41–83 (GCWM…RLIP). The connecting peptide stretch occupies residues 84–87 (HSGS). 2 Beta/gamma crystallin 'Greek key' domains span residues 88-128 (HRIR…NVLE) and 129-171 (GSWV…RRVI).

Belongs to the beta/gamma-crystallin family. As to quaternary structure, monomer.

Functionally, crystallins are the dominant structural components of the vertebrate eye lens. This Homo sapiens (Human) protein is Gamma-crystallin D (CRYGD).